The sequence spans 93 residues: Precursor of CEP13 (93 aa).

An N-terminal signal peptide occupies residues Met-1–Ala-27. Positions Arg-28–Glu-78 are excised as a propeptide. The tract at residues Leu-45 to His-93 is disordered. Hydroxyproline is present on residues Pro-87 and Pro-89.

This sequence belongs to the C-terminally encoded plant signaling peptide (CEP) family. In terms of assembly, interacts with CEP receptors (e.g. CEPR1 and CEPR2). The mature small signaling peptide is generated by proteolytic processing of the longer precursor.

The protein localises to the secreted. It localises to the extracellular space. It is found in the apoplast. Functionally, extracellular signaling peptide that may regulate primary root growth rate and systemic nitrogen (N)-demand signaling. In Arabidopsis thaliana (Mouse-ear cress), this protein is Precursor of CEP13.